Consider the following 1128-residue polypeptide: MAECGRGAAGGALPTSPSPALGAKGALKAGAGEGGGGGGGGRLGHGRARYDSGGVSNGDCSLGVSGDEARTSPGRGPLGVALARTPSPAAGPVPRDSKPGGLPRRSSIIKDGTKQKRERKKTVSFSSMPTEKKISSASDCINSMVEGSELKKVRSNSRIYHRYFLLDADMQSLRWEPSKKDSEKAKIDIKSIKEVRTGKNTDIFRSNGISEQISEDCAFSVIYGENYESLDLVANSADVANIWVTGLRYLISYGKHTLDMLESSQDNMRTSWISQMFSEIDVDGLGHITLCHAVQCIRNLNPGLKTSKIELKFKELHKSKDKAGTEITKEEFIEVFHELCTRPEIYFLLVQFSSNKEFLDTKDLMMFLEAEQGVAHINEEISLEIIHKYEPSKEGQEKGWLSIDGFTNYLMSPDCYIFDPEHKKVCQDMKQPLSHYFINSSHNTYLIEDQFRGPSDITGYIRALKMGCRSVELDVWDGPDNEPVIYTGHTMTSQIVFRSVIDIINKYAFFASEYPLILCLENHCSIKQQKVMVQHMKKILGDKLYTTSPNMEESYLPSPDVLKGKILIKAKKLSSNCSGVEGDVTDEDEGAEMSQRMGKENVEQPNHVPVKRFQLCKELSELVSICKSVQFKEFQVSFQVQKYWEVCSFNEVLASKYANENPGDFVNYNKRFLARVFPSPMRIDSSNMNPQDFWKCGCQIVAMNFQTPGLMMDLNVGWFRQNGNCGYVLRPAIMREEVSFFSANTKDSVPGVSPQLLHIKIISGQNFPKPKGSGAKGDVVDPYVYVEIHGIPADCAEQRTKTVNQNGDAPIFDESFEFQINLPELAMVRFVVLDDDYIGDEFIGQYTIPFECLQTGYRHVPLQSLTGEVLAHASLFVHVAITNRRGGGKPHKRGLSVRKGKKSREYASLRTLWIKTVDEVFKNAQPPIRDATDLRENMQNAVVSFKELCGLSSVANLMQCMLAVSPRFLGPDNNPLVVLNLSEPYPTMELQAIVPEVLKKIVTTYDMMMQSLKALIENADAVYEKIVHCQKAAMEFHEHLHSIGTKEGLKERKLQKAVESFTWNITILKGQADLLKYAKNETLENLKQIHFAAVSCGLNKPGTENSEAQKPRRSLEAIPEKASDENGD.

Residues 1-129 (MAECGRGAAG…KKTVSFSSMP (129 aa)) form a disordered region. The residue at position 2 (A2) is an N-acetylalanine. S16 bears the Phosphoserine mark. Residues 20-30 (ALGAKGALKAG) are compositionally biased toward low complexity. Positions 31–43 (AGEGGGGGGGGRL) are enriched in gly residues. Position 85 is a phosphothreonine (T85). Positions 142-252 (NSMVEGSELK…WVTGLRYLIS (111 aa)) constitute a PH domain. The PI-PLC X-box domain maps to 427-571 (QDMKQPLSHY…LKGKILIKAK (145 aa)). Phosphothreonine is present on T585. Positions 619 to 735 (LSELVSICKS…GYVLRPAIMR (117 aa)) constitute a PI-PLC Y-box domain. The C2 domain occupies 735–864 (REEVSFFSAN…TGYRHVPLQS (130 aa)). The segment at 1100-1128 (KPGTENSEAQKPRRSLEAIPEKASDENGD) is disordered. The span at 1107 to 1128 (EAQKPRRSLEAIPEKASDENGD) shows a compositional bias: basic and acidic residues. S1114 carries the post-translational modification Phosphoserine.

Ubiquitously expressed, with a strong expression in skeletal muscle.

It localises to the cytoplasm. Functionally, may play an role in the regulation of Ins(1,4,5)P3 around the endoplasmic reticulum. This chain is Inactive phospholipase C-like protein 2 (Plcl2), found in Mus musculus (Mouse).